A 279-amino-acid chain; its full sequence is Energy-coupling factor transporter ATP-binding protein EcfA1 (279 aa).

One can recognise an ABC transporter domain in the interval Ile-5–Asp-240. Residue Gly-40–Ser-47 coordinates ATP.

This sequence belongs to the ABC transporter superfamily. Energy-coupling factor EcfA family. Forms a stable energy-coupling factor (ECF) transporter complex composed of 2 membrane-embedded substrate-binding proteins (S component), 2 ATP-binding proteins (A component) and 2 transmembrane proteins (T component).

Its subcellular location is the cell membrane. In terms of biological role, ATP-binding (A) component of a common energy-coupling factor (ECF) ABC-transporter complex. Unlike classic ABC transporters this ECF transporter provides the energy necessary to transport a number of different substrates. The protein is Energy-coupling factor transporter ATP-binding protein EcfA1 of Enterococcus faecalis (strain ATCC 700802 / V583).